The chain runs to 430 residues: Glutamate-1-semialdehyde 2,1-aminomutase (430 aa).

Lys-268 carries the post-translational modification N6-(pyridoxal phosphate)lysine.

It belongs to the class-III pyridoxal-phosphate-dependent aminotransferase family. HemL subfamily. As to quaternary structure, homodimer. Pyridoxal 5'-phosphate serves as cofactor.

It is found in the cytoplasm. The enzyme catalyses (S)-4-amino-5-oxopentanoate = 5-aminolevulinate. It functions in the pathway porphyrin-containing compound metabolism; protoporphyrin-IX biosynthesis; 5-aminolevulinate from L-glutamyl-tRNA(Glu): step 2/2. The sequence is that of Glutamate-1-semialdehyde 2,1-aminomutase (hemL) from Bacillus subtilis (strain 168).